Consider the following 403-residue polypeptide: Acetylornithine aminotransferase (403 aa).

Pyridoxal 5'-phosphate is bound by residues 101–102 (GA) and F134. Position 137 (R137) interacts with N(2)-acetyl-L-ornithine. 219-222 (DEVQ) is a pyridoxal 5'-phosphate binding site. K248 carries the N6-(pyridoxal phosphate)lysine modification. T276 provides a ligand contact to N(2)-acetyl-L-ornithine. T277 lines the pyridoxal 5'-phosphate pocket.

Belongs to the class-III pyridoxal-phosphate-dependent aminotransferase family. ArgD subfamily. As to quaternary structure, homodimer. It depends on pyridoxal 5'-phosphate as a cofactor.

It is found in the cytoplasm. The enzyme catalyses N(2)-acetyl-L-ornithine + 2-oxoglutarate = N-acetyl-L-glutamate 5-semialdehyde + L-glutamate. Its pathway is amino-acid biosynthesis; L-arginine biosynthesis; N(2)-acetyl-L-ornithine from L-glutamate: step 4/4. The protein is Acetylornithine aminotransferase of Brucella melitensis biotype 1 (strain ATCC 23456 / CCUG 17765 / NCTC 10094 / 16M).